Reading from the N-terminus, the 126-residue chain is Aspartate 1-decarboxylase (126 aa).

Residue S25 is the Schiff-base intermediate with substrate; via pyruvic acid of the active site. Pyruvic acid (Ser) is present on S25. T57 is a substrate binding site. Residue Y58 is the Proton donor of the active site. Residue 73–75 (GAA) coordinates substrate.

This sequence belongs to the PanD family. In terms of assembly, heterooctamer of four alpha and four beta subunits. It depends on pyruvate as a cofactor. In terms of processing, is synthesized initially as an inactive proenzyme, which is activated by self-cleavage at a specific serine bond to produce a beta-subunit with a hydroxyl group at its C-terminus and an alpha-subunit with a pyruvoyl group at its N-terminus.

It is found in the cytoplasm. It catalyses the reaction L-aspartate + H(+) = beta-alanine + CO2. It functions in the pathway cofactor biosynthesis; (R)-pantothenate biosynthesis; beta-alanine from L-aspartate: step 1/1. Catalyzes the pyruvoyl-dependent decarboxylation of aspartate to produce beta-alanine. This is Aspartate 1-decarboxylase from Salmonella dublin (strain CT_02021853).